Reading from the N-terminus, the 84-residue chain is Perlustrin (84 aa).

The IGFBP N-terminal domain maps to 1–82 (LSCASCENAA…LDFKGVCARV (82 aa)). Cystine bridges form between cysteine 3–cysteine 28, cysteine 6–cysteine 30, cysteine 11–cysteine 31, cysteine 18–cysteine 34, cysteine 42–cysteine 55, and cysteine 49–cysteine 79.

Shell.

In terms of biological role, binds human IGF1 and IGF2 and bovine insulin. The polypeptide is Perlustrin (Haliotis laevigata (Smooth Australian abalone)).